Consider the following 454-residue polypeptide: Serine/threonine-protein kinase NLK2 (454 aa).

The region spanning 67 to 356 (PEPDRPIGYG…AKDALAHPYL (290 aa)) is the Protein kinase domain. ATP contacts are provided by residues 73–81 (IGYGAFGVV) and Lys-96. The Proton acceptor role is filled by Asp-193.

It belongs to the protein kinase superfamily. CMGC Ser/Thr protein kinase family. MAP kinase subfamily. As to quaternary structure, interacts with sox11, hmgxb4/hmg2l1, rnf138/narf, stat3.1 and mef2a. Mg(2+) is required as a cofactor.

The protein localises to the nucleus. It is found in the cytoplasm. The enzyme catalyses L-seryl-[protein] + ATP = O-phospho-L-seryl-[protein] + ADP + H(+). The catalysed reaction is L-threonyl-[protein] + ATP = O-phospho-L-threonyl-[protein] + ADP + H(+). Activated by tyrosine and threonine phosphorylation. In terms of biological role, negatively regulates Wnt/beta-catenin-signaling during development. Plays a role together with sox11 in neural induction during early embryogenesis. Involved in TGFbeta-mediated mesoderm induction in early embryos, acting downstream of map3k7/tak1 to phosphorylate stat3. Augments the rnf138/narf-directed ubiquitination and degradation of tcf/lef by enhancing the association of rnf138/narf and tcf/lef. Phosphorylates mef2a to play a role in anterior neural development, including eye formation. The protein is Serine/threonine-protein kinase NLK2 (nlk.2) of Xenopus tropicalis (Western clawed frog).